Here is a 195-residue protein sequence, read N- to C-terminus: Imidazoleglycerol-phosphate dehydratase (195 aa).

The protein belongs to the imidazoleglycerol-phosphate dehydratase family.

It localises to the cytoplasm. It catalyses the reaction D-erythro-1-(imidazol-4-yl)glycerol 3-phosphate = 3-(imidazol-4-yl)-2-oxopropyl phosphate + H2O. Its pathway is amino-acid biosynthesis; L-histidine biosynthesis; L-histidine from 5-phospho-alpha-D-ribose 1-diphosphate: step 6/9. This Trichlorobacter lovleyi (strain ATCC BAA-1151 / DSM 17278 / SZ) (Geobacter lovleyi) protein is Imidazoleglycerol-phosphate dehydratase.